Here is a 95-residue protein sequence, read N- to C-terminus: Co-chaperonin GroES (95 aa).

The protein belongs to the GroES chaperonin family. In terms of assembly, heptamer of 7 subunits arranged in a ring. Interacts with the chaperonin GroEL.

Its subcellular location is the cytoplasm. Together with the chaperonin GroEL, plays an essential role in assisting protein folding. The GroEL-GroES system forms a nano-cage that allows encapsulation of the non-native substrate proteins and provides a physical environment optimized to promote and accelerate protein folding. GroES binds to the apical surface of the GroEL ring, thereby capping the opening of the GroEL channel. This Desulforapulum autotrophicum (strain ATCC 43914 / DSM 3382 / VKM B-1955 / HRM2) (Desulfobacterium autotrophicum) protein is Co-chaperonin GroES.